The sequence spans 388 residues: 3-ketoacyl-CoA thiolase (388 aa).

Catalysis depends on Cys91, which acts as the Acyl-thioester intermediate. Active-site proton acceptor residues include His343 and Cys373.

Belongs to the thiolase-like superfamily. Thiolase family. As to quaternary structure, heterotetramer of two alpha chains (FadB) and two beta chains (FadA).

It localises to the cytoplasm. The enzyme catalyses an acyl-CoA + acetyl-CoA = a 3-oxoacyl-CoA + CoA. Its pathway is lipid metabolism; fatty acid beta-oxidation. Functionally, catalyzes the final step of fatty acid oxidation in which acetyl-CoA is released and the CoA ester of a fatty acid two carbons shorter is formed. This chain is 3-ketoacyl-CoA thiolase, found in Photorhabdus laumondii subsp. laumondii (strain DSM 15139 / CIP 105565 / TT01) (Photorhabdus luminescens subsp. laumondii).